The sequence spans 161 residues: Cyclic pyranopterin monophosphate synthase (161 aa).

Substrate is bound by residues 75–77 (MCH) and 115–116 (ME). Asp-130 is a catalytic residue.

The protein belongs to the MoaC family. Homohexamer; trimer of dimers.

The enzyme catalyses (8S)-3',8-cyclo-7,8-dihydroguanosine 5'-triphosphate = cyclic pyranopterin phosphate + diphosphate. Its pathway is cofactor biosynthesis; molybdopterin biosynthesis. Functionally, catalyzes the conversion of (8S)-3',8-cyclo-7,8-dihydroguanosine 5'-triphosphate to cyclic pyranopterin monophosphate (cPMP). The chain is Cyclic pyranopterin monophosphate synthase from Bacillus thuringiensis subsp. konkukian (strain 97-27).